Consider the following 396-residue polypeptide: Elongation factor Tu (396 aa).

The region spanning 10–206 (KPHVNIGTIG…AVDESVPDPV (197 aa)) is the tr-type G domain. The interval 19–26 (GHVDHGKT) is G1. 19 to 26 (GHVDHGKT) serves as a coordination point for GTP. Threonine 26 contacts Mg(2+). The G2 stretch occupies residues 62–66 (GITIN). The tract at residues 83–86 (DAPG) is G3. GTP-binding positions include 83–87 (DAPGH) and 138–141 (NKAD). A G4 region spans residues 138–141 (NKAD). The interval 176–178 (SGL) is G5.

This sequence belongs to the TRAFAC class translation factor GTPase superfamily. Classic translation factor GTPase family. EF-Tu/EF-1A subfamily. Monomer.

The protein resides in the cytoplasm. It carries out the reaction GTP + H2O = GDP + phosphate + H(+). GTP hydrolase that promotes the GTP-dependent binding of aminoacyl-tRNA to the A-site of ribosomes during protein biosynthesis. The chain is Elongation factor Tu from Arthrobacter sp. (strain FB24).